The primary structure comprises 284 residues: Phosphoribosylaminoimidazole-succinocarboxamide synthase (284 aa).

The protein belongs to the SAICAR synthetase family.

It carries out the reaction 5-amino-1-(5-phospho-D-ribosyl)imidazole-4-carboxylate + L-aspartate + ATP = (2S)-2-[5-amino-1-(5-phospho-beta-D-ribosyl)imidazole-4-carboxamido]succinate + ADP + phosphate + 2 H(+). Its pathway is purine metabolism; IMP biosynthesis via de novo pathway; 5-amino-1-(5-phospho-D-ribosyl)imidazole-4-carboxamide from 5-amino-1-(5-phospho-D-ribosyl)imidazole-4-carboxylate: step 1/2. This is Phosphoribosylaminoimidazole-succinocarboxamide synthase from Chromobacterium violaceum (strain ATCC 12472 / DSM 30191 / JCM 1249 / CCUG 213 / NBRC 12614 / NCIMB 9131 / NCTC 9757 / MK).